The following is a 201-amino-acid chain: FMN-dependent NADH:quinone oxidoreductase (201 aa).

Residues Ser10, 16 to 18, 96 to 99, and 140 to 143 contribute to the FMN site; these read SQS, MYNF, and SRGG.

The protein belongs to the azoreductase type 1 family. Homodimer. Requires FMN as cofactor.

The catalysed reaction is 2 a quinone + NADH + H(+) = 2 a 1,4-benzosemiquinone + NAD(+). It catalyses the reaction N,N-dimethyl-1,4-phenylenediamine + anthranilate + 2 NAD(+) = 2-(4-dimethylaminophenyl)diazenylbenzoate + 2 NADH + 2 H(+). In terms of biological role, quinone reductase that provides resistance to thiol-specific stress caused by electrophilic quinones. Functionally, also exhibits azoreductase activity. Catalyzes the reductive cleavage of the azo bond in aromatic azo compounds to the corresponding amines. The sequence is that of FMN-dependent NADH:quinone oxidoreductase from Shigella flexneri serotype 5b (strain 8401).